We begin with the raw amino-acid sequence, 410 residues long: MIDMLVLRLPFIDSLVCSRLSGNDLIAFVDLSKIATLSGMNLSARTVEYHIDGDLTVSGLSHPFESLPTHYSGIAFKIYEGSKNFYPCVEIKASPAKVLQGHNVFGTTDLALCSEALLLNFANSLPCLYDLLDVNATTISRIDATFSARAPNENIAKQVIDHLRNVSNGQTKSTRSQNWESTVTWNETSRHRTLVAYLKHVELQHQIQQLSSKPSAKMTSYQKEQLKVLSNPDLLEFASGLVRFEARIETRYLKSFGLPLNLFDAIRFASDYNRQGKDLIFDLWSFSFSELFKAFEGDSMNIYDDSAVLDAIQSKHFTITPSGKTSFAKASRYFGFYRRLVNEGYDSVALTMPRNSFWRYVSALVECGIPKSQLMNLSTCNNVVPLVRFINVDFSSQRPDWYNEPVLKIA.

The residue at position 1 (Met-1) is an N-formylmethionine.

This sequence belongs to the inovirus G2P protein family.

The enzyme catalyses ATP + (deoxyribonucleotide)n-3'-hydroxyl + 5'-phospho-(deoxyribonucleotide)m = (deoxyribonucleotide)n+m + AMP + diphosphate.. Isoform G2P plays an essential role in viral DNA replication. Binds the origin of replication and cleaves the dsDNA replicative form I (RFI) and becomes covalently bound to it via phosphotyrosine bond, generating the dsDNA replicative form II (RFII). In turn, viral DNA replication initiates at the 3'-OH of the cleavage site. After one round of rolling circle synthesis, protein G2P is linked to the newly synthesized ssDNA and joins the ends of the displaced strand to generate a circular single-stranded molecule ready to be packed into a virion. In terms of biological role, isoform G10P protein binds to double-stranded DNA and prevents hydrolysis by nucleases. Additionally, G10P is an inhibitor of DNA replication and may have a role in the transition from semiconservative replicative form DNA replication to single-stranded DNA synthesis in the life cycle. This Enterobacteria phage fd (Bacteriophage fd) protein is Replication-associated protein G2P (II).